A 449-amino-acid polypeptide reads, in one-letter code: N-succinylarginine dihydrolase (449 aa).

Substrate-binding positions include 19–28, Asn-110, and 137–138; these read GGLSYGNVAS and HR. Residues 23–43 are disordered; that stretch reads YGNVASQSNSQQGSNPREAAR. The span at 25–37 shows a compositional bias: polar residues; that stretch reads NVASQSNSQQGSN. Glu-174 is a catalytic residue. Arg-214 serves as a coordination point for substrate. Residue His-250 is part of the active site. The substrate site is built by Asp-252 and Asn-365. The active-site Nucleophile is the Cys-371.

It belongs to the succinylarginine dihydrolase family. Homodimer.

It catalyses the reaction N(2)-succinyl-L-arginine + 2 H2O + 2 H(+) = N(2)-succinyl-L-ornithine + 2 NH4(+) + CO2. Its pathway is amino-acid degradation; L-arginine degradation via AST pathway; L-glutamate and succinate from L-arginine: step 2/5. Its function is as follows. Catalyzes the hydrolysis of N(2)-succinylarginine into N(2)-succinylornithine, ammonia and CO(2). The chain is N-succinylarginine dihydrolase from Pseudomonas putida (strain GB-1).